We begin with the raw amino-acid sequence, 315 residues long: L-lactate dehydrogenase (315 aa).

Residues Val12, Asp33, and Tyr65 each coordinate NAD(+). Residues Gln82, Arg88, and 120–123 (NPVD) contribute to the substrate site. Residues 118 to 120 (ISN) and Ser143 each bind NAD(+). 148–151 (DTSR) provides a ligand contact to substrate. Residues Arg153 and His168 each contribute to the beta-D-fructose 1,6-bisphosphate site. His175 (proton acceptor) is an active-site residue. The residue at position 219 (Tyr219) is a Phosphotyrosine. Thr228 is a substrate binding site.

The protein belongs to the LDH/MDH superfamily. LDH family. Homotetramer.

It localises to the cytoplasm. It carries out the reaction (S)-lactate + NAD(+) = pyruvate + NADH + H(+). The protein operates within fermentation; pyruvate fermentation to lactate; (S)-lactate from pyruvate: step 1/1. Allosterically activated by fructose 1,6-bisphosphate (FBP). Catalyzes the conversion of lactate to pyruvate. This chain is L-lactate dehydrogenase, found in Mycoplasmopsis pulmonis (strain UAB CTIP) (Mycoplasma pulmonis).